The chain runs to 208 residues: Imidazole glycerol phosphate synthase subunit HisH (208 aa).

The Glutamine amidotransferase type-1 domain maps to Met-1–Ser-206. Residue Cys-79 is the Nucleophile of the active site. Catalysis depends on residues His-181 and Glu-183.

In terms of assembly, heterodimer of HisH and HisF.

Its subcellular location is the cytoplasm. It catalyses the reaction 5-[(5-phospho-1-deoxy-D-ribulos-1-ylimino)methylamino]-1-(5-phospho-beta-D-ribosyl)imidazole-4-carboxamide + L-glutamine = D-erythro-1-(imidazol-4-yl)glycerol 3-phosphate + 5-amino-1-(5-phospho-beta-D-ribosyl)imidazole-4-carboxamide + L-glutamate + H(+). It carries out the reaction L-glutamine + H2O = L-glutamate + NH4(+). The protein operates within amino-acid biosynthesis; L-histidine biosynthesis; L-histidine from 5-phospho-alpha-D-ribose 1-diphosphate: step 5/9. Functionally, IGPS catalyzes the conversion of PRFAR and glutamine to IGP, AICAR and glutamate. The HisH subunit catalyzes the hydrolysis of glutamine to glutamate and ammonia as part of the synthesis of IGP and AICAR. The resulting ammonia molecule is channeled to the active site of HisF. The chain is Imidazole glycerol phosphate synthase subunit HisH from Listeria innocua serovar 6a (strain ATCC BAA-680 / CLIP 11262).